The primary structure comprises 391 residues: Formate-dependent phosphoribosylglycinamide formyltransferase (391 aa).

N(1)-(5-phospho-beta-D-ribosyl)glycinamide-binding positions include 18–19 (EL) and Glu78. Residues Arg110, Lys151, 156–161 (SSGKGQ), 191–194 (EEFI), and Glu199 contribute to the ATP site. Positions 115 to 305 (DLAAQQLGLR…EFELHLRAVL (191 aa)) constitute an ATP-grasp domain. 2 residues coordinate Mg(2+): Glu264 and Glu276. Residues Asp283, Lys353, and 360–361 (RR) each bind N(1)-(5-phospho-beta-D-ribosyl)glycinamide.

Belongs to the PurK/PurT family. In terms of assembly, homodimer.

The enzyme catalyses N(1)-(5-phospho-beta-D-ribosyl)glycinamide + formate + ATP = N(2)-formyl-N(1)-(5-phospho-beta-D-ribosyl)glycinamide + ADP + phosphate + H(+). It participates in purine metabolism; IMP biosynthesis via de novo pathway; N(2)-formyl-N(1)-(5-phospho-D-ribosyl)glycinamide from N(1)-(5-phospho-D-ribosyl)glycinamide (formate route): step 1/1. Its function is as follows. Involved in the de novo purine biosynthesis. Catalyzes the transfer of formate to 5-phospho-ribosyl-glycinamide (GAR), producing 5-phospho-ribosyl-N-formylglycinamide (FGAR). Formate is provided by PurU via hydrolysis of 10-formyl-tetrahydrofolate. The sequence is that of Formate-dependent phosphoribosylglycinamide formyltransferase from Synechococcus elongatus (strain ATCC 33912 / PCC 7942 / FACHB-805) (Anacystis nidulans R2).